A 350-amino-acid chain; its full sequence is 3-dehydroquinate synthase (350 aa).

NAD(+) is bound by residues G106–D110, T130–S131, K143, and K152. Positions 185, 246, and 263 each coordinate Zn(2+).

This sequence belongs to the sugar phosphate cyclases superfamily. Dehydroquinate synthase family. Requires Co(2+) as cofactor. Zn(2+) serves as cofactor. NAD(+) is required as a cofactor.

The protein resides in the cytoplasm. The enzyme catalyses 7-phospho-2-dehydro-3-deoxy-D-arabino-heptonate = 3-dehydroquinate + phosphate. Its pathway is metabolic intermediate biosynthesis; chorismate biosynthesis; chorismate from D-erythrose 4-phosphate and phosphoenolpyruvate: step 2/7. Its function is as follows. Catalyzes the conversion of 3-deoxy-D-arabino-heptulosonate 7-phosphate (DAHP) to dehydroquinate (DHQ). This chain is 3-dehydroquinate synthase, found in Clostridium perfringens (strain SM101 / Type A).